The sequence spans 197 residues: Small ribosomal subunit protein uS4 (197 aa).

Residues 87 to 147 form the S4 RNA-binding domain; the sequence is SRIDNVIFRL…ESKKNTQRMK (61 aa).

The protein belongs to the universal ribosomal protein uS4 family. As to quaternary structure, part of the 30S ribosomal subunit. Contacts protein S5. The interaction surface between S4 and S5 is involved in control of translational fidelity.

One of the primary rRNA binding proteins, it binds directly to 16S rRNA where it nucleates assembly of the body of the 30S subunit. In terms of biological role, with S5 and S12 plays an important role in translational accuracy. The sequence is that of Small ribosomal subunit protein uS4 from Agathobacter rectalis (strain ATCC 33656 / DSM 3377 / JCM 17463 / KCTC 5835 / VPI 0990) (Eubacterium rectale).